The following is a 520-amino-acid chain: MAALRLLAWAFSRRVSAHRPQPTLPHHLIRHYPTTRCGKVKFYTDPVKAVEGIKDGASVMLGGFGLCGIPENLIGALKTKGVKDLKIISSNVGVDDFGLGILLASKQVRRVVCSYLGENKLCEQLYLAGKLELEMTPQGTLAERIRAGGTGVPAFYTPTGYGTQVQEGGVPIRYSPEGHLITLSQPREVREFEGQHHLLERAIRADFALIKGWKADRSGNVIFRGSARNFNVPMCKAADISVVEVEEIVDVGTFAPEDIHIPNIYVKRVIKGPRFEKRIERLTTRDSPPAPGSKDQDPKRTRIIKRAALEFKDGMYANLGIGIPVLASNYISPKMTVYLHSENGILGLGPFPLKKEVDPDIINAGKQTVTVIPGGCFFASDDSFAMIRGGHIQLTMLGAMQVSKYGDLANWMVPGKKVKGMGGAMDLVSSKKTKVVVTMEHCTKTKQPKILEKCTMPLTGKSCVDLIITEKAVFEVDRSKGLKLVELWEGSSLDEVKATTGCSFKVCPNLKPMQQIKSDA.

Residues 1-39 constitute a mitochondrion transit peptide; it reads MAALRLLAWAFSRRVSAHRPQPTLPHHLIRHYPTTRCGK. Residues 280-299 are disordered; it reads ERLTTRDSPPAPGSKDQDPK. Glutamate 342 serves as the catalytic 5-glutamyl coenzyme A thioester intermediate.

Belongs to the 3-oxoacid CoA-transferase family. In terms of assembly, homodimer. As to expression, expressed in flagella of epididymal sperm.

It is found in the mitochondrion. The catalysed reaction is a 3-oxo acid + succinyl-CoA = a 3-oxoacyl-CoA + succinate. Its pathway is ketone metabolism; succinyl-CoA degradation; acetoacetyl-CoA from succinyl-CoA: step 1/1. Functionally, key enzyme for ketone body catabolism. Transfers the CoA moiety from succinate to acetoacetate. Formation of the enzyme-CoA intermediate proceeds via an unstable anhydride species formed between the carboxylate groups of the enzyme and substrate. Probably play and important roles in the energy metabolism of spermatozoa. This is Succinyl-CoA:3-ketoacid coenzyme A transferase 2A, mitochondrial (Oxct2a) from Rattus norvegicus (Rat).